We begin with the raw amino-acid sequence, 680 residues long: MSIREKLLMKKIVKREKMKKELSQKKGNKNAQKQEPPKQNGNKPSKKPEKLSKKHVAKDEDDDLEEDFQEAPLPKKKQQKQPPKKQQIQVANSDSESDDDEQEDEADEDSDLDEVAEVDEEDVDSGSEDDDQQEDEDEEEPVPAKKTKLLPNKSKAQNGKPAKDDEPFTVESSLAALDYRDSDDRSFASLKGAVSEATLRAIKEMGFTEMTEIQSKSLTPLLKGRDLVGAAQTGSGKTLAFLIPAVELINKLRFMPRNGTGVIIISPTRELSMQTFGVLKELMAHHHHTYGLVMGGSNRQVESEKLGKGINILVATPGRLLDHLQNSPDFLYKNLQCLIIDEVDRILEIGFEEELKQIINLLPKRRQTMLFSATQTARIEALSKLALKSEPIYVGVHDNQDTATVDGLEQGYIVCPSEKRLLVLFTFLKKNRKKKVMVFFSSCMSVKYHHELFNYIDLPVTSIHGKQKQTKRTTTFFQFCNAESGILLCTDVAARGLDIPQVDWIVQYDPPDDPREYIHRVGRTARGSGTSGHALLLMRPEELGFLRYLKAAKVPLNEFEFSWQKIADIQLQLEKLIAKNYFLNQSAKEAFKSYVRAYDSHQLKQIFNVNTLDLQAVAKSFGFLVPPVVDLKVGAAKRERPEKRVGGGGFGFYKKMNEGSASKQRHFKQVNRDQAKKFMR.

The tract at residues 1-168 (MSIREKLLMK…GKPAKDDEPF (168 aa)) is disordered. Residues 29–42 (KNAQKQEPPKQNGN) are compositionally biased toward polar residues. Positions 59-69 (DEDDDLEEDFQ) are enriched in acidic residues. Residues 74–83 (PKKKQQKQPP) show a composition bias toward basic residues. Acidic residues predominate over residues 95–141 (SESDDDEQEDEADEDSDLDEVAEVDEEDVDSGSEDDDQQEDEDEEEP). Residues 187-215 (FASLKGAVSEATLRAIKEMGFTEMTEIQS) carry the Q motif motif. Residues 218–393 (LTPLLKGRDL…KLALKSEPIY (176 aa)) enclose the Helicase ATP-binding domain. An ATP-binding site is contributed by 231–238 (AQTGSGKT). The DEVD box motif lies at 341–344 (DEVD). A Helicase C-terminal domain is found at 407–577 (GLEQGYIVCP…DIQLQLEKLI (171 aa)). Residues 659 to 680 (GSASKQRHFKQVNRDQAKKFMR) are disordered. A compositionally biased stretch (basic and acidic residues) spans 670–680 (VNRDQAKKFMR).

This sequence belongs to the DEAD box helicase family. DDX18/HAS1 subfamily.

The protein resides in the nucleus. The protein localises to the nucleolus. The catalysed reaction is ATP + H2O = ADP + phosphate + H(+). In terms of biological role, probable RNA-dependent helicase. Functions in cell growth and proliferation. May have a role in ribosome biogenesis and, consequently, in protein biosynthesis. In Drosophila melanogaster (Fruit fly), this protein is Probable ATP-dependent RNA helicase pitchoune (pit).